The primary structure comprises 406 residues: COP9 signalosome complex subunit 4 (406 aa).

Ala2 bears the N-acetylalanine mark. Lys25 carries the N6-acetyllysine modification. The 170-residue stretch at 197 to 366 folds into the PCI domain; that stretch reads YRRKFIEAAQ…GIVHFETREA (170 aa).

Belongs to the CSN4 family. In terms of assembly, component of the CSN complex, composed of COPS1/GPS1, COPS2, COPS3, COPS4, COPS5, COPS6, COPS7 (COPS7A or COPS7B), COPS8 and COPS9. In the complex, it probably interacts directly with COPS1, COPS2, COPS3, COPS5, COPS6, COPS7 (COPS7A or COPS7B) and COPS8. Interacts with TOR1A; the interaction is direct and associates TOR1A and SNAPIN with the CSN complex. Interacts with STON2; controls STON2 neddylation levels. Interacts with ERCC6.

The protein resides in the cytoplasm. It is found in the nucleus. It localises to the cytoplasmic vesicle. Its subcellular location is the secretory vesicle. The protein localises to the synaptic vesicle. Functionally, component of the COP9 signalosome complex (CSN), a complex involved in various cellular and developmental processes. The CSN complex is an essential regulator of the ubiquitin (Ubl) conjugation pathway by mediating the deneddylation of the cullin subunits of SCF-type E3 ligase complexes, leading to decrease the Ubl ligase activity of SCF-type complexes such as SCF, CSA or DDB2. Also involved in the deneddylation of non-cullin subunits such as STON2. The complex is also involved in phosphorylation of p53/TP53, c-jun/JUN, IkappaBalpha/NFKBIA, ITPK1, IRF8/ICSBP and SNAPIN, possibly via its association with CK2 and PKD kinases. CSN-dependent phosphorylation of TP53 and JUN promotes and protects degradation by the Ubl system, respectively. This chain is COP9 signalosome complex subunit 4 (Cops4), found in Mus musculus (Mouse).